Reading from the N-terminus, the 538-residue chain is CTP synthase (538 aa).

Positions 1–266 (MKTKFIFVTG…DDQVVDKLNI (266 aa)) are amidoligase domain. Residue serine 14 coordinates CTP. Position 14 (serine 14) interacts with UTP. Residues 15–20 (SIGKGL) and aspartate 72 contribute to the ATP site. The Mg(2+) site is built by aspartate 72 and glutamate 140. CTP is bound by residues 147-149 (DIE), 187-192 (KTKPTQ), and lysine 223. UTP-binding positions include 187 to 192 (KTKPTQ) and lysine 223. The Glutamine amidotransferase type-1 domain occupies 292–534 (HIAIVGKYVN…IAAALEHRGK (243 aa)). Glycine 354 is a binding site for L-glutamine. Cysteine 381 functions as the Nucleophile; for glutamine hydrolysis in the catalytic mechanism. L-glutamine-binding positions include 382-385 (LGMQ), glutamate 405, and arginine 462. Catalysis depends on residues histidine 507 and glutamate 509.

The protein belongs to the CTP synthase family. In terms of assembly, homotetramer.

The catalysed reaction is UTP + L-glutamine + ATP + H2O = CTP + L-glutamate + ADP + phosphate + 2 H(+). The enzyme catalyses L-glutamine + H2O = L-glutamate + NH4(+). It catalyses the reaction UTP + NH4(+) + ATP = CTP + ADP + phosphate + 2 H(+). Its pathway is pyrimidine metabolism; CTP biosynthesis via de novo pathway; CTP from UDP: step 2/2. Its activity is regulated as follows. Allosterically activated by GTP, when glutamine is the substrate; GTP has no effect on the reaction when ammonia is the substrate. The allosteric effector GTP functions by stabilizing the protein conformation that binds the tetrahedral intermediate(s) formed during glutamine hydrolysis. Inhibited by the product CTP, via allosteric rather than competitive inhibition. Catalyzes the ATP-dependent amination of UTP to CTP with either L-glutamine or ammonia as the source of nitrogen. Regulates intracellular CTP levels through interactions with the four ribonucleotide triphosphates. The protein is CTP synthase of Geobacter metallireducens (strain ATCC 53774 / DSM 7210 / GS-15).